Consider the following 648-residue polypeptide: Threonine--tRNA ligase (648 aa).

Positions 1–61 constitute a TGS domain; that stretch reads MINITFPDGA…DTDGSIEIVT (61 aa). A catalytic region spans residues 242-540; it reads DHRKLGKELD…LIETYKGAFP (299 aa). Zn(2+) contacts are provided by Cys336, His387, and His517.

It belongs to the class-II aminoacyl-tRNA synthetase family. In terms of assembly, homodimer. The cofactor is Zn(2+).

The protein localises to the cytoplasm. The enzyme catalyses tRNA(Thr) + L-threonine + ATP = L-threonyl-tRNA(Thr) + AMP + diphosphate + H(+). Its function is as follows. Catalyzes the attachment of threonine to tRNA(Thr) in a two-step reaction: L-threonine is first activated by ATP to form Thr-AMP and then transferred to the acceptor end of tRNA(Thr). Also edits incorrectly charged L-seryl-tRNA(Thr). This Streptococcus uberis (strain ATCC BAA-854 / 0140J) protein is Threonine--tRNA ligase.